The primary structure comprises 126 residues: Large ribosomal subunit protein bL12 (126 aa).

It belongs to the bacterial ribosomal protein bL12 family. As to quaternary structure, homodimer. Part of the ribosomal stalk of the 50S ribosomal subunit. Forms a multimeric L10(L12)X complex, where L10 forms an elongated spine to which 2 to 4 L12 dimers bind in a sequential fashion. Binds GTP-bound translation factors.

Its function is as follows. Forms part of the ribosomal stalk which helps the ribosome interact with GTP-bound translation factors. Is thus essential for accurate translation. The sequence is that of Large ribosomal subunit protein bL12 from Citrifermentans bemidjiense (strain ATCC BAA-1014 / DSM 16622 / JCM 12645 / Bem) (Geobacter bemidjiensis).